We begin with the raw amino-acid sequence, 96 residues long: Small ribosomal subunit protein bS6 (96 aa).

The protein belongs to the bacterial ribosomal protein bS6 family.

Functionally, binds together with bS18 to 16S ribosomal RNA. In Streptococcus gordonii (strain Challis / ATCC 35105 / BCRC 15272 / CH1 / DL1 / V288), this protein is Small ribosomal subunit protein bS6.